The primary structure comprises 1296 residues: Nuclear factor related to kappa-B-binding protein (1296 aa).

A DEUBAD domain is found at 39–156 (PEDLLEDPEI…LKQILASRSD (118 aa)). Disordered stretches follow at residues 165-186 (GPAL…EREW) and 204-232 (GDTA…PAVP). The segment covering 216 to 232 (SSWLPSSPARSPSPAVP) has biased composition (low complexity). 2 positions are modified to phosphoserine: serine 228 and serine 298. Lysine 327 participates in a covalent cross-link: Glycyl lysine isopeptide (Lys-Gly) (interchain with G-Cter in SUMO2). Serine 351 bears the Phosphoserine mark. The interval 370–495 (LGINEISSSF…FCKENEDSSD (126 aa)) is winged-helix like domain. Residue lysine 469 forms a Glycyl lysine isopeptide (Lys-Gly) (interchain with G-Cter in SUMO2) linkage. A Glycyl lysine isopeptide (Lys-Gly) (interchain with G-Cter in SUMO1); alternate cross-link involves residue lysine 488. Lysine 488 is covalently cross-linked (Glycyl lysine isopeptide (Lys-Gly) (interchain with G-Cter in SUMO2); alternate). Disordered regions lie at residues 663–758 (QAQA…SSGV) and 1015–1036 (HAAD…PAGT). Residues 700–713 (PSEQSQMSLSDSSM) show a composition bias toward low complexity. The segment covering 726 to 737 (PALPTPISPPPV) has biased composition (pro residues). A compositionally biased stretch (polar residues) spans 741 to 758 (NRSGSSTVSEPAQSSSGV). Residues 1016–1034 (AADSPAKAPSASVPSSAPA) show a composition bias toward low complexity. Serine 1019 is modified (phosphoserine). At lysine 1234 the chain carries N6-acetyllysine. Residue serine 1288 is modified to Phosphoserine.

The protein belongs to the NFRKB family. Component of the chromatin remodeling INO80 complex; specifically part of a complex module associated with the N-terminus of INO80. Interacts with UCHL5.

It is found in the nucleus. In terms of biological role, binds to the DNA consensus sequence 5'-GGGGAATCTCC-3'. Functionally, putative regulatory component of the chromatin remodeling INO80 complex which is involved in transcriptional regulation, DNA replication and probably DNA repair. Modulates the deubiquitinase activity of UCHL5 in the INO80 complex. The chain is Nuclear factor related to kappa-B-binding protein (Nfrkb) from Mus musculus (Mouse).